We begin with the raw amino-acid sequence, 541 residues long: Phosphoenolpyruvate carboxykinase (ATP) (541 aa).

Substrate is bound by residues arginine 67, tyrosine 207, and lysine 213. ATP is bound by residues lysine 213, histidine 232, and 248–256; that span reads GLSGTGKTT. Residues lysine 213 and histidine 232 each contribute to the Mn(2+) site. Aspartate 269 is a binding site for Mn(2+). ATP contacts are provided by residues glutamate 297, arginine 333, 449–450, and threonine 455; that span reads RI. Arginine 333 is a binding site for substrate.

This sequence belongs to the phosphoenolpyruvate carboxykinase (ATP) family. Monomer. Requires Mn(2+) as cofactor.

The protein resides in the cytoplasm. The catalysed reaction is oxaloacetate + ATP = phosphoenolpyruvate + ADP + CO2. It functions in the pathway carbohydrate biosynthesis; gluconeogenesis. Its function is as follows. Involved in the gluconeogenesis. Catalyzes the conversion of oxaloacetate (OAA) to phosphoenolpyruvate (PEP) through direct phosphoryl transfer between the nucleoside triphosphate and OAA. This chain is Phosphoenolpyruvate carboxykinase (ATP), found in Vibrio atlanticus (strain LGP32) (Vibrio splendidus (strain Mel32)).